We begin with the raw amino-acid sequence, 366 residues long: Dual-specificity RNA methyltransferase RlmN (366 aa).

Glu-102 functions as the Proton acceptor in the catalytic mechanism. Positions 108-340 constitute a Radical SAM core domain; the sequence is DEGRNTLCVS…TTTRKTRGRD (233 aa). Cys-115 and Cys-345 are joined by a disulfide. [4Fe-4S] cluster-binding residues include Cys-122, Cys-126, and Cys-129. S-adenosyl-L-methionine contacts are provided by residues 171-172, Ser-203, 225-227, and Asn-302; these read GE and SLH. The active-site S-methylcysteine intermediate is Cys-345.

The protein belongs to the radical SAM superfamily. RlmN family. Requires [4Fe-4S] cluster as cofactor.

It is found in the cytoplasm. It carries out the reaction adenosine(2503) in 23S rRNA + 2 reduced [2Fe-2S]-[ferredoxin] + 2 S-adenosyl-L-methionine = 2-methyladenosine(2503) in 23S rRNA + 5'-deoxyadenosine + L-methionine + 2 oxidized [2Fe-2S]-[ferredoxin] + S-adenosyl-L-homocysteine. The enzyme catalyses adenosine(37) in tRNA + 2 reduced [2Fe-2S]-[ferredoxin] + 2 S-adenosyl-L-methionine = 2-methyladenosine(37) in tRNA + 5'-deoxyadenosine + L-methionine + 2 oxidized [2Fe-2S]-[ferredoxin] + S-adenosyl-L-homocysteine. In terms of biological role, specifically methylates position 2 of adenine 2503 in 23S rRNA and position 2 of adenine 37 in tRNAs. m2A2503 modification seems to play a crucial role in the proofreading step occurring at the peptidyl transferase center and thus would serve to optimize ribosomal fidelity. The protein is Dual-specificity RNA methyltransferase RlmN of Methylococcus capsulatus (strain ATCC 33009 / NCIMB 11132 / Bath).